Here is a 448-residue protein sequence, read N- to C-terminus: MKSCEVNFDGLVGPTHNYGGLSYGNVASQSNSQQCANPREAALQGLAKMKALMDLGFTQGVLAPQERPDVAGLRQLGFIGSDEQVIEKAARQDMPLLVASCSASSMWVANAATVSPSADTADGRVHFTAANLNCKYHRSIEHPTTSRVLGAMFADAKHFAHHPALPPVAQFGDEGAANHTRFCQDYGQPGVEFFVFGRSAFDTRYPAPQKYPARQTLEASRAVARLHGLSEGGVVYAQQNPAVIDQGVFHNDVIAVGNGEVLFYHEDAFLNTEPMLNELRDKLGRVGGQLRAICVPRAEVSVQDAVRSYLFNSQLLSRPDGSMLLIVPQECQANASVWAYLQRLIADDSPVAQVKVFDLKQSMQNGGGPACLRLRVALKETELAAVNPGVIMTAPLYDTLTQWVDRHYRDRMSENDLADPRLLIQCRTALDELTQILKLGAVYPFQLN.

Residues 19 to 28 (GGLSYGNVAS), N110, and 137 to 138 (HR) each bind substrate. The active site involves E174. R214 provides a ligand contact to substrate. H250 is an active-site residue. D252 and N365 together coordinate substrate. Residue C371 is the Nucleophile of the active site.

Belongs to the succinylarginine dihydrolase family. Homodimer.

It carries out the reaction N(2)-succinyl-L-arginine + 2 H2O + 2 H(+) = N(2)-succinyl-L-ornithine + 2 NH4(+) + CO2. It functions in the pathway amino-acid degradation; L-arginine degradation via AST pathway; L-glutamate and succinate from L-arginine: step 2/5. Functionally, catalyzes the hydrolysis of N(2)-succinylarginine into N(2)-succinylornithine, ammonia and CO(2). This Pseudomonas savastanoi pv. phaseolicola (strain 1448A / Race 6) (Pseudomonas syringae pv. phaseolicola (strain 1448A / Race 6)) protein is N-succinylarginine dihydrolase.